We begin with the raw amino-acid sequence, 82 residues long: Exodeoxyribonuclease 7 small subunit (82 aa).

It belongs to the XseB family. Heterooligomer composed of large and small subunits.

It localises to the cytoplasm. It catalyses the reaction Exonucleolytic cleavage in either 5'- to 3'- or 3'- to 5'-direction to yield nucleoside 5'-phosphates.. Functionally, bidirectionally degrades single-stranded DNA into large acid-insoluble oligonucleotides, which are then degraded further into small acid-soluble oligonucleotides. The sequence is that of Exodeoxyribonuclease 7 small subunit from Pectobacterium carotovorum subsp. carotovorum (strain PC1).